We begin with the raw amino-acid sequence, 235 residues long: Large ribosomal subunit protein uL1 (235 aa).

It belongs to the universal ribosomal protein uL1 family. In terms of assembly, part of the 50S ribosomal subunit.

In terms of biological role, binds directly to 23S rRNA. The L1 stalk is quite mobile in the ribosome, and is involved in E site tRNA release. Its function is as follows. Protein L1 is also a translational repressor protein, it controls the translation of the L11 operon by binding to its mRNA. The chain is Large ribosomal subunit protein uL1 from Renibacterium salmoninarum (strain ATCC 33209 / DSM 20767 / JCM 11484 / NBRC 15589 / NCIMB 2235).